The chain runs to 390 residues: MLLKRRLFIAASLFAMHLSPALAADAVSFAPQPPAIDAGAWVLMDYTTGQVLTAGNEHQQRNPASLTKLMTGYVVDRAIDSHRISPDDIVTVGRDAWAKDNPVFVGSSLMFLKEGDRVSVRDLSRGLIVDSGNDACVALADYIAGGQPQFVAMMNSYVKKLNLQDTHFETVHGLDAPGQHSSAYDLAVLSRAIIHGEPEFYHMYSEKSLTWNGITQQNRNGLLWDKTMHIDGLKTGHTSGAGFNLIASAVDGQRRLIAVVMGAKSSKGREEQARKLLQWGQQNFATVQILHSGKKVGSERIWYGDKEKIALGTEQDFWMALPKAEIPHIKAKYVLDRKELEAPIAAHQQVGEIELYDRDKLIAQWPLVTLESVGKGGMFSRLSDYFQHKA.

The signal sequence occupies residues 1-23 (MLLKRRLFIAASLFAMHLSPALA). Ser-65 (acyl-ester intermediate) is an active-site residue. Catalysis depends on Lys-68, which acts as the Proton acceptor. Residue Ser-131 is part of the active site. Residue Lys-234 coordinates substrate.

This sequence belongs to the peptidase S11 family.

Its subcellular location is the cell inner membrane. The catalysed reaction is Preferential cleavage: (Ac)2-L-Lys-D-Ala-|-D-Ala. Also transpeptidation of peptidyl-alanyl moieties that are N-acyl substituents of D-alanine.. It functions in the pathway cell wall biogenesis; peptidoglycan biosynthesis. Functionally, removes C-terminal D-alanyl residues from sugar-peptide cell wall precursors. The protein is D-alanyl-D-alanine carboxypeptidase DacD (dacD) of Salmonella typhimurium (strain LT2 / SGSC1412 / ATCC 700720).